A 741-amino-acid chain; its full sequence is Catalase-peroxidase (741 aa).

The first 23 residues, 1 to 23, serve as a signal peptide directing secretion; that stretch reads MLKKIITALGMSGMLLASSNAIA. A cross-link (tryptophyl-tyrosyl-methioninium (Trp-Tyr) (with M-249)) is located at residues 102 to 223; sequence WHDAGTYRIY…YAATQMGLIY (122 aa). Residue histidine 103 is the Proton acceptor of the active site. The tryptophyl-tyrosyl-methioninium (Tyr-Met) (with W-102) cross-link spans 223–249; sequence YVNPEGPDGKPDIKGAASEIRQAFRAM. Residue histidine 264 participates in heme b binding.

This sequence belongs to the peroxidase family. Peroxidase/catalase subfamily. In terms of assembly, homodimer or homotetramer. Requires heme b as cofactor. Formation of the three residue Trp-Tyr-Met cross-link is important for the catalase, but not the peroxidase activity of the enzyme.

It catalyses the reaction H2O2 + AH2 = A + 2 H2O. The catalysed reaction is 2 H2O2 = O2 + 2 H2O. Functionally, bifunctional enzyme with both catalase and broad-spectrum peroxidase activity. The protein is Catalase-peroxidase of Francisella tularensis subsp. holarctica (strain FTNF002-00 / FTA).